The following is a 411-amino-acid chain: Potassium channel subfamily K member 3 (411 aa).

At 1-8 (MKRQNVRT) the chain is on the cytoplasmic side. The chain crosses the membrane as a helical span at residues 9–29 (LALIVCTFTYLLVGAAVFDAL). N-linked (GlcNAc...) asparagine glycosylation occurs at N53. Positions 78–101 (WRFAGSFYFAITVITTIGYGHAAP) form an intramembrane region, pore-forming. A helical transmembrane segment spans residues 108-128 (VFCMFYALLGIPLTLVMFQSL). The Cytoplasmic segment spans residues 129 to 158 (GERINTFVRYLLHRAKRGLGMRHAEVSMAN). A helical membrane pass occupies residues 159–179 (MVLIGFVSCISTLCIGAAAFS). An intramembrane region (pore-forming) is located at residues 184 to 207 (WTFFQAYYYCFITLTTIGFGDYVA). The helical transmembrane segment at 223–243 (FSFVYILTGLTVIGAFLNLVV) threads the bilayer. Topologically, residues 244-411 (LRFMTMNAED…RGLMKRRSSV (168 aa)) are cytoplasmic.

Belongs to the two pore domain potassium channel (TC 1.A.1.8) family. Homodimer. Heterodimer with KCNK1. Heterodimer with KCNK9. Strongest expression in heart. Moderate expression in lung and brain. Low levels in liver, kidney and skeletal muscle. Expressed in cerebellar granule cells (at protein level).

It is found in the cell membrane. It catalyses the reaction K(+)(in) = K(+)(out). The enzyme catalyses Na(+)(in) = Na(+)(out). Its activity is regulated as follows. Inhibited by extracellular acidification, muscarinic signaling, divalent metal cations Zn(2+) and Ba(2+), isoflurane, bupivacaine and phenytoin. Activated by protein kinase A. Ruthenium red resistant. K(+) channel that conducts voltage-dependent outward rectifying currents upon membrane depolarization. Voltage sensing is coupled to K(+) electrochemical gradient in an 'ion flux gating' mode where outward but not inward ion flow opens the gate. Changes ion selectivity and becomes permeable to Na(+) ions in response to extracellular acidification. Protonation of the pH sensor His-98 stabilizes C-type inactivation conformation likely converting the channel from outward K(+)-conducting, to inward Na(+)-conducting to nonconductive state. Homo- and heterodimerizes to form functional channels with distinct regulatory and gating properties. Allows K(+) currents with fast-gating kinetics important for the repolarization and hyperpolarization phases of action potentials. In cerebellar granule cells, heteromeric KCNK3:KCNK9 channel may hyperpolarize the resting membrane potential to limit intrinsic neuronal excitability, but once the action potential threshold is reached, it may support high-frequency action potential firing and increased neuronal excitability. Dispensable for central chemosensory respiration i.e. breathing controlled by brainstem CO2/pH, it rather conducts pH-sensitive currents and controls the firing rate of serotonergic raphe neurons involved in potentiation of the respiratory chemoreflex. Additionally, imparts chemosensitivity to type 1 cells in carotid bodies which respond to a decrease in arterial oxygen pressure or an increase in carbon dioxide pressure or pH to initiate adaptive changes in pulmonary ventilation. In adrenal gland, contributes to the maintenance of a hyperpolarized resting membrane potential of aldosterone-producing cells at zona glomerulosa and limits aldosterone release as part of a regulatory mechanism that controls arterial blood pressure and electrolyte homeostasis. In brown adipocytes, mediates K(+) efflux that counteracts norepinephrine-induced membrane depolarization, limits Ca(2+) efflux and downstream cAMP and PKA signaling, ultimately attenuating lipid oxidation and adaptive thermogenesis. The polypeptide is Potassium channel subfamily K member 3 (Rattus norvegicus (Rat)).